Here is a 364-residue protein sequence, read N- to C-terminus: Aminomethyltransferase (364 aa).

It belongs to the GcvT family. As to quaternary structure, the glycine cleavage system is composed of four proteins: P, T, L and H.

It catalyses the reaction N(6)-[(R)-S(8)-aminomethyldihydrolipoyl]-L-lysyl-[protein] + (6S)-5,6,7,8-tetrahydrofolate = N(6)-[(R)-dihydrolipoyl]-L-lysyl-[protein] + (6R)-5,10-methylene-5,6,7,8-tetrahydrofolate + NH4(+). Functionally, the glycine cleavage system catalyzes the degradation of glycine. This chain is Aminomethyltransferase, found in Anoxybacillus flavithermus (strain DSM 21510 / WK1).